We begin with the raw amino-acid sequence, 103 residues long: ATP-dependent Clp protease adapter protein ClpS 2 (103 aa).

Belongs to the ClpS family. Binds to the N-terminal domain of the chaperone ClpA.

In terms of biological role, involved in the modulation of the specificity of the ClpAP-mediated ATP-dependent protein degradation. This Agrobacterium fabrum (strain C58 / ATCC 33970) (Agrobacterium tumefaciens (strain C58)) protein is ATP-dependent Clp protease adapter protein ClpS 2.